The sequence spans 377 residues: Porphobilinogen deaminase (377 aa).

The residue at position 269 (cysteine 269) is an S-(dipyrrolylmethanemethyl)cysteine.

This sequence belongs to the HMBS family. Monomer. The cofactor is dipyrromethane.

It carries out the reaction 4 porphobilinogen + H2O = hydroxymethylbilane + 4 NH4(+). It participates in porphyrin-containing compound metabolism; protoporphyrin-IX biosynthesis; coproporphyrinogen-III from 5-aminolevulinate: step 2/4. Tetrapolymerization of the monopyrrole PBG into the hydroxymethylbilane pre-uroporphyrinogen in several discrete steps. This Micrococcus luteus (strain ATCC 4698 / DSM 20030 / JCM 1464 / CCM 169 / CCUG 5858 / IAM 1056 / NBRC 3333 / NCIMB 9278 / NCTC 2665 / VKM Ac-2230) (Micrococcus lysodeikticus) protein is Porphobilinogen deaminase.